A 134-amino-acid polypeptide reads, in one-letter code: Retinol-binding protein 2 (134 aa).

Positions 41 and 109 each coordinate all-trans-retinol.

Belongs to the calycin superfamily. Fatty-acid binding protein (FABP) family.

Its subcellular location is the cytoplasm. Intracellular transport of retinol. The polypeptide is Retinol-binding protein 2 (Rbp2) (Rattus norvegicus (Rat)).